Here is a 127-residue protein sequence, read N- to C-terminus: Copper resistance protein C (127 aa).

Residues 1 to 25 (MFAFRSIATTVVMVAASLASASAFA) form the signal peptide. Residues H26, M65, M68, M71, M76, and H116 each coordinate Cu cation.

The protein belongs to the CopC family.

It localises to the periplasm. In terms of biological role, copper-binding protein involved in copper resistance. The polypeptide is Copper resistance protein C (Xanthomonas campestris pv. juglandis (Xanthomonas arboricola pv. juglandis)).